Reading from the N-terminus, the 336-residue chain is 3-isopropylmalate dehydrogenase (336 aa).

Residues arginine 87, arginine 97, arginine 121, and aspartate 211 each coordinate substrate. Residues aspartate 211, aspartate 235, and aspartate 239 each coordinate Mg(2+). 271–283 contacts NAD(+); sequence GSAPDIAGQGIAD.

The protein belongs to the isocitrate and isopropylmalate dehydrogenases family. LeuB type 2 subfamily. In terms of assembly, homodimer. It depends on Mg(2+) as a cofactor. Requires Mn(2+) as cofactor.

It is found in the cytoplasm. The catalysed reaction is (2R,3S)-3-isopropylmalate + NAD(+) = 4-methyl-2-oxopentanoate + CO2 + NADH. It participates in amino-acid biosynthesis; L-leucine biosynthesis; L-leucine from 3-methyl-2-oxobutanoate: step 3/4. Its function is as follows. Catalyzes the oxidation of 3-carboxy-2-hydroxy-4-methylpentanoate (3-isopropylmalate) to 3-carboxy-4-methyl-2-oxopentanoate. The product decarboxylates to 4-methyl-2 oxopentanoate. In Mycobacterium sp. (strain JLS), this protein is 3-isopropylmalate dehydrogenase.